We begin with the raw amino-acid sequence, 433 residues long: Lipase 2 (433 aa).

The Involved in the stabilization of the negatively charged intermediate by the formation of the oxyanion hole motif lies at 165–167 (HGG). The active-site Charge relay system is the S239. Active-site residues include D361 and H391.

This sequence belongs to the 'GDXG' lipolytic enzyme family.

It carries out the reaction a triacylglycerol + H2O = a diacylglycerol + a fatty acid + H(+). The sequence is that of Lipase 2 (lip2) from Moraxella sp. (strain TA144).